A 299-amino-acid polypeptide reads, in one-letter code: MFDYKLLSALAAVIEQAGFERAAQVLGLSQSAISQRIKLLEARVGQPVLVRVTPPAPTEIGRRLLNHVQQVRLLERDLQSLVPALDEEGLPERLRIALNADSLATWWAGAVGDFCAEHHLLLDLVVEDQTVGLKRMRAGEVAACVCASERPVAGARSLLLGAMRYRAMASPEFIVRHFPQGVRAEQLPRTPALVFGPDDFLQHRYLASLGVDGAFEHHLCPSSEGFIRLTEAGLGWGLVPELQVREQLERGLLLELLPDKPIDVPLYWHHWRNGGQLLGLLTEHLARLSAQWLVPWEQP.

An HTH lysR-type domain is found at 2–58; it reads FDYKLLSALAAVIEQAGFERAAQVLGLSQSAISQRIKLLEARVGQPVLVRVTPPAPT. The segment at residues 19-38 is a DNA-binding region (H-T-H motif); the sequence is FERAAQVLGLSQSAISQRIK.

This sequence belongs to the LysR transcriptional regulatory family. Homodimer.

Its function is as follows. Controls the transcription of genes involved in arginine and lysine metabolism. The polypeptide is HTH-type transcriptional regulator ArgP (Pseudomonas fluorescens (strain ATCC BAA-477 / NRRL B-23932 / Pf-5)).